A 154-amino-acid chain; its full sequence is Cyclin-dependent protein kinase inhibitor SMR11 (154 aa).

The interval 1-44 (MEQEEPCEAKETASSSIEPKTPNPNVPDSIPAIDSDSSLSEEEI) is disordered. Residues 27–38 (PDSIPAIDSDSS) are compositionally biased toward low complexity.

As to quaternary structure, interacts with CYCB2-4.

Functionally, probable cyclin-dependent protein kinase (CDK) inhibitor that functions as a repressor of mitosis in the endoreduplication cell cycle. The chain is Cyclin-dependent protein kinase inhibitor SMR11 from Arabidopsis thaliana (Mouse-ear cress).